Here is a 367-residue protein sequence, read N- to C-terminus: Phospho-N-acetylmuramoyl-pentapeptide-transferase (367 aa).

10 helical membrane passes run 16 to 36 (LLLAAAAFILTLIVGGWWVHF), 62 to 82 (TMGGVMIVSTVVVLTVLFNLV), 87 to 107 (MLLPLGVMISFAVLGAIDDWL), 125 to 145 (FWIMTAVAFVASLALYLPQPY), 158 to 178 (VGEVNIGLWFIPIAVLIIVFI), 190 to 210 (SLAGWNLTLSFGAYGVITFLA), 214 to 234 (LTNLMAFCFTVVGACAAFLWY), 240 to 260 (QVFMGDLGALSLGATLAVVAL), 264 to 284 (QWILLPVIGIVFVVEALSTLI), and 326 to 346 (FVLIGTVAAMVGISLALIFGS).

The protein belongs to the glycosyltransferase 4 family. MraY subfamily. Mg(2+) is required as a cofactor.

It localises to the cell membrane. It carries out the reaction UDP-N-acetyl-alpha-D-muramoyl-L-alanyl-gamma-D-glutamyl-meso-2,6-diaminopimeloyl-D-alanyl-D-alanine + di-trans,octa-cis-undecaprenyl phosphate = di-trans,octa-cis-undecaprenyl diphospho-N-acetyl-alpha-D-muramoyl-L-alanyl-D-glutamyl-meso-2,6-diaminopimeloyl-D-alanyl-D-alanine + UMP. It functions in the pathway cell wall biogenesis; peptidoglycan biosynthesis. Catalyzes the initial step of the lipid cycle reactions in the biosynthesis of the cell wall peptidoglycan: transfers peptidoglycan precursor phospho-MurNAc-pentapeptide from UDP-MurNAc-pentapeptide onto the lipid carrier undecaprenyl phosphate, yielding undecaprenyl-pyrophosphoryl-MurNAc-pentapeptide, known as lipid I. This Chloroflexus aggregans (strain MD-66 / DSM 9485) protein is Phospho-N-acetylmuramoyl-pentapeptide-transferase.